We begin with the raw amino-acid sequence, 304 residues long: Fructose permease IIC component (304 aa).

The region spanning 1–304 is the PTS EIIC type-2 domain; sequence IHSADPKDPT…GIIKKPVEEK (304 aa). 8 consecutive transmembrane segments (helical) span residues 20–40, 62–82, 98–118, 140–160, 181–201, 214–234, 238–258, and 277–297; these read FIGSDNALKLIVAVLAGFIAM, NAGFLGGLIAGFLAGYVVILL, PVLIYPLLGIFITGVLMQFVI, NLVLMGIILGGMMAIDMGGPL, AAIMAGGMVPPLGIALATTFF, ITCYFMGAAFVTEGAIPFAAA, VIPAAVIGSAVAGGLTEFFRV, and LLYLLSIVIGAIVTAVILGII.

It is found in the cell membrane. Functionally, the phosphoenolpyruvate-dependent sugar phosphotransferase system (PTS), a major carbohydrate active -transport system, catalyzes the phosphorylation of incoming sugar substrates concomitant with their translocation across the cell membrane. This system is involved in fructose transport. The chain is Fructose permease IIC component (fruA) from Bacillus amyloliquefaciens (Bacillus velezensis).